Here is a 160-residue protein sequence, read N- to C-terminus: Endoribonuclease YbeY (160 aa).

3 residues coordinate Zn(2+): histidine 127, histidine 131, and histidine 137.

The protein belongs to the endoribonuclease YbeY family. It depends on Zn(2+) as a cofactor.

It is found in the cytoplasm. Single strand-specific metallo-endoribonuclease involved in late-stage 70S ribosome quality control and in maturation of the 3' terminus of the 16S rRNA. The sequence is that of Endoribonuclease YbeY from Synechococcus sp. (strain RCC307).